The sequence spans 716 residues: Protein C-mannosyl-transferase DPY19L3 (716 aa).

Over 1 to 43 (MMSIRQRREIRATEVSEDFPAQEENVKLENKLPSGCTSRRLWK) the chain is Cytoplasmic. The helical transmembrane segment at 44–64 (ILSLTIGGTIALCIGLLTSVY) threads the bilayer. Residues 65-154 (LATLHENDLW…RVLPIQKYLE (90 aa)) are Lumenal-facing. Asn118 carries N-linked (GlcNAc...) asparagine glycosylation. A helical membrane pass occupies residues 155–182 (PVYFYIYTLFGLQAIYVTALYITSWLLS). The Cytoplasmic portion of the chain corresponds to 183–184 (GT). The name=3 intramembrane region spans 185 to 197 (WLSGLLAAFWYVT). Topologically, residues 198–215 (NRIDTTRVEFTIPLRENW) are cytoplasmic. The name=4 intramembrane region spans 216–230 (ALPFFAIQIAAITYF). Residues 231–239 (LRPNLQPLS) are Cytoplasmic-facing. Residues 240–256 (ERLTLLAIFISTFLFSL) form a helical membrane-spanning segment. The Lumenal segment spans residues 257 to 262 (TWQFNQ). A helical membrane pass occupies residues 263–279 (FMMLMQALVLFTLDSLD). Residues 280–289 (MLPAVKATWL) are Cytoplasmic-facing. A helical transmembrane segment spans residues 290 to 306 (YGIQITSLLLVCILQFF). At 307–308 (NS) the chain is on the lumenal side. Residues 309-323 (MILGSLLISFNLSVF) form a helical membrane-spanning segment. Topologically, residues 324 to 338 (IARKLQKNLKTGSFL) are cytoplasmic. Residues 339–359 (NRLGKLLLHLFMVLCLTLFLN) form a helical membrane-spanning segment. At 360-414 (NIIKKILNLKSDEHIFKFLKAKFGLGATRDFDANLYLCEEAFGLLPFNTFGRLSD) the chain is on the lumenal side. The chain crosses the membrane as a helical span at residues 415-437 (TLLFYAYIFVLSITVIVAFVVAF). At 438–465 (HNLSDSTNQQSVGKMEKGTVDLKPETAY) the chain is on the cytoplasmic side. The chain crosses the membrane as a helical span at residues 466-485 (NLIHTILFGFLALSTMRMKY). The Lumenal segment spans residues 486 to 487 (LW). Residues 488–499 (TSHMCVFASFGL) traverse the membrane as a helical segment. The Cytoplasmic portion of the chain corresponds to 500–522 (CSPEIWELLLKSVHLYNPKRICI). A helical transmembrane segment spans residues 523 to 539 (MRYSVPILILLYLCYKF). Topologically, residues 540–716 (WPGMMDELSE…FHVYKLSRNK (177 aa)) are lumenal. Asn704 carries N-linked (GlcNAc...) asparagine glycosylation.

Belongs to the dpy-19 family. Widely expressed.

Its subcellular location is the endoplasmic reticulum membrane. The catalysed reaction is L-tryptophyl-[protein] + a di-trans,poly-cis-dolichyl beta-D-mannosyl phosphate = C-alpha-D-mannosyl-L-tryptophyl-[protein] + a di-trans,poly-cis-dolichyl phosphate + H(+). It participates in protein modification; protein glycosylation. Functionally, C-mannosyltransferase that mediates C-mannosylation of tryptophan residues on target proteins. The reaction occurs on the luminal side of the endoplasmic reticulum and involves the transfer of a mannose unit from a dolichylphosphate mannose (Dol-P-Man) donor to an acceptor protein containing a WxxW or WxxC consensus sequence. C-mannosylates RSPO1, a Wnt signaling regulator, preferentially at the first Trp residue in the sequence WxxW. C-mannosylates the netrin receptor UNC5A, preferentially at the third tryptophan of WxxWxxWxxC sequence. Its function is as follows. Has no C-mannosyltransferase activity. The chain is Protein C-mannosyl-transferase DPY19L3 (DPY19L3) from Homo sapiens (Human).